Consider the following 328-residue polypeptide: Methionyl-tRNA formyltransferase (328 aa).

A (6S)-5,6,7,8-tetrahydrofolate-binding site is contributed by 110–113; that stretch reads SLLP.

Belongs to the Fmt family.

It catalyses the reaction L-methionyl-tRNA(fMet) + (6R)-10-formyltetrahydrofolate = N-formyl-L-methionyl-tRNA(fMet) + (6S)-5,6,7,8-tetrahydrofolate + H(+). Its function is as follows. Attaches a formyl group to the free amino group of methionyl-tRNA(fMet). The formyl group appears to play a dual role in the initiator identity of N-formylmethionyl-tRNA by promoting its recognition by IF2 and preventing the misappropriation of this tRNA by the elongation apparatus. This chain is Methionyl-tRNA formyltransferase, found in Prochlorococcus marinus subsp. pastoris (strain CCMP1986 / NIES-2087 / MED4).